A 238-amino-acid polypeptide reads, in one-letter code: Pyridoxine 5'-phosphate synthase (238 aa).

Asparagine 7 serves as a coordination point for 3-amino-2-oxopropyl phosphate. Residue 9–10 coordinates 1-deoxy-D-xylulose 5-phosphate; sequence DH. Residue arginine 18 coordinates 3-amino-2-oxopropyl phosphate. The active-site Proton acceptor is histidine 43. 1-deoxy-D-xylulose 5-phosphate is bound by residues arginine 45 and histidine 50. Glutamate 70 functions as the Proton acceptor in the catalytic mechanism. Threonine 100 provides a ligand contact to 1-deoxy-D-xylulose 5-phosphate. Residue histidine 190 is the Proton donor of the active site. Residues glycine 191 and 212–213 contribute to the 3-amino-2-oxopropyl phosphate site; that span reads GH.

This sequence belongs to the PNP synthase family. In terms of assembly, homooctamer; tetramer of dimers.

It localises to the cytoplasm. It carries out the reaction 3-amino-2-oxopropyl phosphate + 1-deoxy-D-xylulose 5-phosphate = pyridoxine 5'-phosphate + phosphate + 2 H2O + H(+). It participates in cofactor biosynthesis; pyridoxine 5'-phosphate biosynthesis; pyridoxine 5'-phosphate from D-erythrose 4-phosphate: step 5/5. Its function is as follows. Catalyzes the complicated ring closure reaction between the two acyclic compounds 1-deoxy-D-xylulose-5-phosphate (DXP) and 3-amino-2-oxopropyl phosphate (1-amino-acetone-3-phosphate or AAP) to form pyridoxine 5'-phosphate (PNP) and inorganic phosphate. The chain is Pyridoxine 5'-phosphate synthase from Prochlorococcus marinus (strain MIT 9215).